The primary structure comprises 131 residues: Lymphocyte antigen 6C2 (131 aa).

An N-terminal signal peptide occupies residues 1–26; sequence MDSTHATKSCLLILLVALLCAGRAQG. The UPAR/Ly6 domain occupies 27–116; sequence LQCYECYGVP…TAGSTWTMAG (90 aa). Cystine bridges form between C29–C53, C32–C41, C46–C74, C78–C95, and C96–C101. G109 carries the GPI-anchor amidated glycine lipid modification. A propeptide spans 110–131 (removed in mature form); the sequence is STWTMAGVLLFSLSSVILQTLL.

The protein localises to the cell membrane. The polypeptide is Lymphocyte antigen 6C2 (Ly6c2) (Mus musculus (Mouse)).